The following is a 292-amino-acid chain: 4-diphosphocytidyl-2-C-methyl-D-erythritol kinase (292 aa).

The active site involves Lys20. Pro103 to Ser113 lines the ATP pocket. Residue Asp145 is part of the active site.

It belongs to the GHMP kinase family. IspE subfamily.

The enzyme catalyses 4-CDP-2-C-methyl-D-erythritol + ATP = 4-CDP-2-C-methyl-D-erythritol 2-phosphate + ADP + H(+). It functions in the pathway isoprenoid biosynthesis; isopentenyl diphosphate biosynthesis via DXP pathway; isopentenyl diphosphate from 1-deoxy-D-xylulose 5-phosphate: step 3/6. Functionally, catalyzes the phosphorylation of the position 2 hydroxy group of 4-diphosphocytidyl-2C-methyl-D-erythritol. This is 4-diphosphocytidyl-2-C-methyl-D-erythritol kinase from Cupriavidus necator (strain ATCC 17699 / DSM 428 / KCTC 22496 / NCIMB 10442 / H16 / Stanier 337) (Ralstonia eutropha).